The chain runs to 263 residues: Methylesterase 2 (263 aa).

Ser-85 (acyl-ester intermediate) is an active-site residue. Catalysis depends on charge relay system residues Asp-213 and His-241.

The protein belongs to the AB hydrolase superfamily. Methylesterase family.

It catalyses the reaction methyl (indol-3-yl)acetate + H2O = (indol-3-yl)acetate + methanol + H(+). It carries out the reaction methyl (-)-jasmonate + H2O = jasmonate + methanol + H(+). The catalysed reaction is methyl salicylate + H2O = salicylate + methanol + H(+). The protein operates within plant hormone biosynthesis. Its pathway is lipid metabolism; oxylipin biosynthesis. Its activity is regulated as follows. Esterase activity is down-regulated by salicylic acid (SA). Down-regulated by agrochemicals Paraoxon, 3,4-DCl and Profenofos. Its function is as follows. Methylesterase shown to have carboxylesterase activity, methyl indole-3-acetic acid (MeIAA) esterase activity, methyl salicylate (MeSA) esterase activity and methyl jasmonate (MeJA) esterase activity in vitro. The sequence is that of Methylesterase 2 from Arabidopsis thaliana (Mouse-ear cress).